Consider the following 126-residue polypeptide: Holo-[acyl-carrier-protein] synthase (126 aa).

Mg(2+) contacts are provided by Asp-9 and Glu-58.

The protein belongs to the P-Pant transferase superfamily. AcpS family. It depends on Mg(2+) as a cofactor.

It is found in the cytoplasm. It carries out the reaction apo-[ACP] + CoA = holo-[ACP] + adenosine 3',5'-bisphosphate + H(+). Functionally, transfers the 4'-phosphopantetheine moiety from coenzyme A to a Ser of acyl-carrier-protein. This Serratia proteamaculans (strain 568) protein is Holo-[acyl-carrier-protein] synthase.